Reading from the N-terminus, the 718-residue chain is Mitotic spindle assembly checkpoint protein MAD1 (718 aa).

Residue M1 is modified to N-acetylmethionine. S16 bears the Phosphoserine mark. A coiled-coil region spans residues 46-632; it reads QQSMQLEERA…QTKIQEFRKA (587 aa). K61 is modified (N6-acetyllysine; alternate). K61 participates in a covalent cross-link: Glycyl lysine isopeptide (Lys-Gly) (interchain with G-Cter in SUMO2); alternate. A Nuclear localization signal motif is present at residues 79–82; it reads KRAR. S214 carries the phosphoserine modification. Positions 301 to 340 are important for interaction with IK; sequence VGLELENERLLAKLQSWERLDQTMGLSIRTPEDLSRFVVE. Residues 380–532 form a necessary for interaction with NEK2 region; sequence LLEERKKRET…EAQLERRALQ (153 aa). Position 428 is a phosphoserine (S428). The interval 439–480 is important for interaction with IK; it reads EDMVQKVHSHSAEMEAQLSQALEELGGQKQRADMLEMELKML. The interval 540 to 551 is necessary for interaction with MAD2L1; sequence TKVLHMSLNPTS. A phosphoserine mark is found at S598 and S610. A Phosphotyrosine modification is found at Y634. Residue T716 is modified to Phosphothreonine.

It belongs to the MAD1 family. As to quaternary structure, homodimer. Dimerizes via its N- and C- terminal regions. Heterodimerizes with MAD2L1 in order to form a tetrameric MAD1L1-MAD2L1 core complex. Interacts with the closed conformation form of MAD2L1 (C-MAD2) and open conformation form of MAD2L1 (O-MAD2). It is unclear whether MAD1L1 dimerization promotes the conversion of closed to open conformation of MAD2L1. Formation of a heterotetrameric core complex containing two molecules each of MAD1L1 and of MAD2L1 promotes binding of another molecule of MAD2L1 to each MAD2L1, resulting in a heterohexamer. Perturbation of the original MAD1L1-MAD2L1 structure by the spindle checkpoint may decrease MAD2L1 affinity for MAD1L1. CDC20 can compete with MAD1L1 for MAD2L1 binding, until the attachment and/or tension dampen the checkpoint signal, preventing further release of MAD2L1 on to CDC20. Also able to interact with the BUB1/BUB3 complex. Interacts with NEK2. Interacts with TTK. Interacts with TPR; the interactions occurs in a microtubule-independent manner. Interacts with IK. Interacts with the viral Tax protein. Interacts with PRAP1. Interacts with MAD2L1; this interaction leads to the cytoplasmic sequestration of MAD2L1. Interacts with PRAP1. Post-translationally, phosphorylated; by BUB1. Become hyperphosphorylated in late S through M phases or after mitotic spindle damage. Phosphorylated; by TTK. As to expression, expressed in hepatocellular carcinomas and hepatoma cell lines (at protein level).

The protein localises to the nucleus. It is found in the chromosome. The protein resides in the centromere. It localises to the kinetochore. Its subcellular location is the nucleus envelope. The protein localises to the cytoplasm. It is found in the cytoskeleton. The protein resides in the microtubule organizing center. It localises to the centrosome. Its subcellular location is the spindle. The protein localises to the spindle pole. Its function is as follows. Component of the spindle-assembly checkpoint that prevents the onset of anaphase until all chromosomes are properly aligned at the metaphase plate. Forms a heterotetrameric complex with the closed conformation form of MAD2L1 (C-MAD2) at unattached kinetochores during prometaphase, recruits an open conformation of MAD2L1 (O-MAD2) and promotes the conversion of O-MAD2 to C-MAD2, which ensures mitotic checkpoint signaling. Functionally, sequesters MAD2L1 in the cytoplasm preventing its function as an activator of the mitotic spindle assembly checkpoint (SAC) resulting in SAC impairment and chromosomal instability in hepatocellular carcinomas. This Homo sapiens (Human) protein is Mitotic spindle assembly checkpoint protein MAD1 (MAD1L1).